We begin with the raw amino-acid sequence, 719 residues long: Pesticidal crystal protein Cry1Ic (719 aa).

Belongs to the delta endotoxin family.

Its function is as follows. Promotes colloidosmotic lysis by binding to the midgut epithelial cells of insects. The polypeptide is Pesticidal crystal protein Cry1Ic (cry1Ic) (Bacillus thuringiensis).